We begin with the raw amino-acid sequence, 264 residues long: MSNSNIHTTAVIAEGAKLGKNVKIGPYCIIGPEVVLHDNVELKSHVVIEGITEIGENTVIYPFASIGQPPQILKYANERSSTIIGSNNTIREYVTVQAGSQGGGMMTRVGNNNLFMVGVHIGHDCKIGNNVVFANYVSLAGHIGVGDYAIIGGLSAVHQYARIGEYSMIGGLSPVGADVIPFGLVSSKRAVLEGLNLIGMNRKGFDKVKSLSALKAIEEIFSGEGNFAERIKQVAEKYNNNSIVIQIIDFLNQDSSRAFCRFEK.

The protein belongs to the transferase hexapeptide repeat family. LpxA subfamily. In terms of assembly, homotrimer.

The protein localises to the cytoplasm. It carries out the reaction a (3R)-hydroxyacyl-[ACP] + UDP-N-acetyl-alpha-D-glucosamine = a UDP-3-O-[(3R)-3-hydroxyacyl]-N-acetyl-alpha-D-glucosamine + holo-[ACP]. It functions in the pathway glycolipid biosynthesis; lipid IV(A) biosynthesis; lipid IV(A) from (3R)-3-hydroxytetradecanoyl-[acyl-carrier-protein] and UDP-N-acetyl-alpha-D-glucosamine: step 1/6. Functionally, involved in the biosynthesis of lipid A, a phosphorylated glycolipid that anchors the lipopolysaccharide to the outer membrane of the cell. The protein is Acyl-[acyl-carrier-protein]--UDP-N-acetylglucosamine O-acyltransferase of Rickettsia africae (strain ESF-5).